A 413-amino-acid chain; its full sequence is Queuine tRNA-ribosyltransferase accessory subunit 2 (413 aa).

The segment at 298-321 is disordered; sequence LEKSETSGAERNGDVGAESEEPDA. Residues cysteine 349, cysteine 351, cysteine 354, and histidine 380 each contribute to the Zn(2+) site.

This sequence belongs to the queuine tRNA-ribosyltransferase family. QTRT2 subfamily. As to quaternary structure, heterodimer of a catalytic subunit qtrt1 and an accessory subunit qtrt2. It depends on Zn(2+) as a cofactor.

The protein resides in the cytoplasm. Its subcellular location is the mitochondrion outer membrane. In terms of biological role, non-catalytic subunit of the queuine tRNA-ribosyltransferase (TGT) that catalyzes the base-exchange of a guanine (G) residue with queuine (Q) at position 34 (anticodon wobble position) in tRNAs with GU(N) anticodons (tRNA-Asp, -Asn, -His and -Tyr), resulting in the hypermodified nucleoside queuosine (7-(((4,5-cis-dihydroxy-2-cyclopenten-1-yl)amino)methyl)-7-deazaguanosine). This Xenopus tropicalis (Western clawed frog) protein is Queuine tRNA-ribosyltransferase accessory subunit 2.